We begin with the raw amino-acid sequence, 119 residues long: MALKIRLRQQGRRNHVVYRLVLADVESPRDGKYIELLGWYDPHSSINYQLKSERIFYWLERGAQLSSKAEALVKQGAPGVYSALLSKQEARKLVVRKKRRAYRQRRSTQREEAAKDATK.

Positions 96–107 (RKKRRAYRQRRS) are enriched in basic residues. The segment at 96-119 (RKKRRAYRQRRSTQREEAAKDATK) is disordered. Basic and acidic residues predominate over residues 108–119 (TQREEAAKDATK).

Belongs to the bacterial ribosomal protein bS16 family.

This is Small ribosomal subunit protein bS16 from Chlamydia pneumoniae (Chlamydophila pneumoniae).